A 176-amino-acid chain; its full sequence is uncharacterized protein (176 aa).

This is an uncharacterized protein from Bacillus anthracis.